A 147-amino-acid polypeptide reads, in one-letter code: Nucleoside diphosphate kinase (147 aa).

The ATP site is built by Lys-11, Phe-59, Arg-87, Thr-93, Arg-104, and Asn-114. Residue His-117 is the Pros-phosphohistidine intermediate of the active site.

It belongs to the NDK family. As to quaternary structure, homotetramer. Requires Mg(2+) as cofactor.

It localises to the cytoplasm. It catalyses the reaction a 2'-deoxyribonucleoside 5'-diphosphate + ATP = a 2'-deoxyribonucleoside 5'-triphosphate + ADP. The catalysed reaction is a ribonucleoside 5'-diphosphate + ATP = a ribonucleoside 5'-triphosphate + ADP. Its function is as follows. Major role in the synthesis of nucleoside triphosphates other than ATP. The ATP gamma phosphate is transferred to the NDP beta phosphate via a ping-pong mechanism, using a phosphorylated active-site intermediate. The sequence is that of Nucleoside diphosphate kinase from Anaeromyxobacter sp. (strain K).